A 461-amino-acid chain; its full sequence is MASEQNSPDALLSIRSSCNRCRNHKLKCVVTEAPNGTACCQRCIRAMVPCKFGRRERKKRGSSPRVVPQSPWMHSPWETTSTSMQSIYPNTEAMDVGRADALVVHGTNAFPPPANVPAEQSLTGDHSAILTPGSMNMGIFNHLSLDANNLEADDIHAYKFPHGQLHEAHHTQYWHFQADEWRMDHPNDDSHSDYSATSSSKAATAALLQLAADLQERLDALENEPSWRRKNASMDKYPIGSVLQLSSKLQQLGRCLQTDDSSSTQSESSRSRASVGATSSVHRLQMPVLESGTSDACLNVSHLTSTTRFDTSVSLMLLSCFVTLLQISTGVLGHFQDYLHAHPKTRARTLSMSAAQSSIVSLGDLDPQQQTHDRIHTAIYVLLNSLEEVEEALCLPPRVRLAITLQASPRSDGSTSEQEKAMSAAFYGGLSAATEGIDDILTEFGRRVNDTKGMLRQHMDL.

The segment at residues cysteine 18 to cysteine 50 is a DNA-binding region (zn(2)-C6 fungal-type). Disordered regions lie at residues arginine 55–threonine 79 and leucine 256–threonine 278. Residues leucine 256–serine 274 show a composition bias toward low complexity.

Its subcellular location is the nucleus. Functionally, transcription factor that regulates the expression of the gene cluster that mediates the biosynthesis of the trans-fused decalin-containing tetramic acid phomasetin. This is Transcription factor phm6 from Pyrenochaetopsis sp.